The primary structure comprises 274 residues: Orotidine 5'-phosphate decarboxylase (274 aa).

Residue Lys-96 is the Proton donor of the active site.

The protein belongs to the OMP decarboxylase family. Type 2 subfamily.

It catalyses the reaction orotidine 5'-phosphate + H(+) = UMP + CO2. Its pathway is pyrimidine metabolism; UMP biosynthesis via de novo pathway; UMP from orotate: step 2/2. The sequence is that of Orotidine 5'-phosphate decarboxylase from Bacteroides fragilis (strain YCH46).